We begin with the raw amino-acid sequence, 201 residues long: 3-isopropylmalate dehydratase small subunit (201 aa).

Belongs to the LeuD family. LeuD type 1 subfamily. As to quaternary structure, heterodimer of LeuC and LeuD.

The catalysed reaction is (2R,3S)-3-isopropylmalate = (2S)-2-isopropylmalate. Its pathway is amino-acid biosynthesis; L-leucine biosynthesis; L-leucine from 3-methyl-2-oxobutanoate: step 2/4. Catalyzes the isomerization between 2-isopropylmalate and 3-isopropylmalate, via the formation of 2-isopropylmaleate. The polypeptide is 3-isopropylmalate dehydratase small subunit (Shewanella halifaxensis (strain HAW-EB4)).